A 1419-amino-acid polypeptide reads, in one-letter code: MKDLVNFLKAQSKTAEDFDVIKIGLASPDMIRSWSFGEVKKPETINYRTFKPERDGLFCARIFGPVKDYECLCGKYKRLKHRGVICEKCGVEVTQTKVRRERMGHIELASPVAHIWFLKSLPSRIGLLLDMPLRDIERVLYFESYIVIEPGMTDLEKGQLLTEEQYLDAEERWADEFEAKMGAEAIQSILRDMDLEHECEVLREELQETNSETKRKKITKRLKLLEAFIQSGNKPEWMVMTVLPVLPPDLRPLVPLDGGRFATSDLNDLYRRVINRNNRLKRLLDLVAPDIIVRNEKRMLQESVDALLDNGRRGRAITGSNRRPLKSLADMIKGKQGRFRQNLLGKRVDYSGRSVITVGPYLHLHQCGLPKKMALELFRPFIYAKLESRGYATTIKAAKKMVEREDVIVWDILAEVIREHPILLNRAPTLHRLGIQAFEPILIEGKAIQLHPLVCAAFNADFDGDQMAVHVPLTLEAQLEARALMMSTNNILSPANGDPIIVPSQDVVLGIYYMTRDKVNGKGEGMLLQDPREAEKAYRTGRAELHSRVKIRITEYVKNAEGEFEPQTNLVDTTVGRAILWMIAPKGMPFNLFNQTLGKKAISKLINECYRRLGMKESVMFADQIMYTGFAYAARSGSSVGIDDMVIPEKKYEIIAAAEQEVAEIQEQFQSGLVTVGERYNKVIDIWAAANERVAKVMMENLSTEEVINREGNPEKQSSFNSIFMMADSGARGSAAQIRQLAGMRGLMARPDGSIIETPITANFREGLNVLQYFISTHGARKGLADTALKTANSGYLTRRLVDVAQDLVIVEDDCGTHEGIVMSPLIEGGDEKVPLRELVLGRVAAEDVLKPGTEEVLIPRNTLIDEQWCNIIDENSVDSIKVRSVVTCDTDFGVCAKCYGRDLARGHLINQGEAVGVIAAQSIGEPGTQLTMRTFHIGGAASAAAKESSVQVKNNGTIRLANVKFVTNNEGKLVLTSRNTELTVIDAFGRTKEHYKLPYGTTLNKADGAEVTAGEIVANWDPHTMPVISEVAGFVKFVDIVDGLTVSRQTDELTGLSSILVQDVGERATAGKDLRPAIKLVDAQGNDILIEGTDVAAQYFLPGKAIVTLDDGAEINVGDPLARIPQESVGTKDITGGLPRVADLFEARKPKEPAILAEISGIVSFGKETKGKRRLLITPTDGGETYEEMIPKWRQLNVFEGEMVQRGDLISDGAETPHDILRLRGVHAVTEYIVNEVQEVYRLQGVKINDKHIEVIVRQMLRKAIITNAYDSEFLEGEQVEVARIKIVNRKREAEGKPLVEFERELLGITKASLATESFISAASFQETTRVLTEAAVAGKRDELRGLKENVIVGRLIPAGTGFAYHQNRAKNRHNALAAEQAVKFSAADEAEIDAEFNMIADDPTSSLAEMLNMADEE.

Zn(2+)-binding residues include Cys-71, Cys-73, Cys-86, and Cys-89. Residues Asp-461, Asp-463, and Asp-465 each contribute to the Mg(2+) site. Zn(2+)-binding residues include Cys-815, Cys-889, Cys-896, and Cys-899.

The protein belongs to the RNA polymerase beta' chain family. In terms of assembly, the RNAP catalytic core consists of 2 alpha, 1 beta, 1 beta' and 1 omega subunit. When a sigma factor is associated with the core the holoenzyme is formed, which can initiate transcription. Mg(2+) serves as cofactor. Zn(2+) is required as a cofactor.

It carries out the reaction RNA(n) + a ribonucleoside 5'-triphosphate = RNA(n+1) + diphosphate. Its function is as follows. DNA-dependent RNA polymerase catalyzes the transcription of DNA into RNA using the four ribonucleoside triphosphates as substrates. The polypeptide is DNA-directed RNA polymerase subunit beta' (Actinobacillus succinogenes (strain ATCC 55618 / DSM 22257 / CCUG 43843 / 130Z)).